Consider the following 296-residue polypeptide: Farnesyl diphosphate synthase (296 aa).

Positions 46, 49, and 78 each coordinate isopentenyl diphosphate. Residues Asp85 and Asp91 each contribute to the Mg(2+) site. Arg96 is a (2E)-geranyl diphosphate binding site. Arg97 is an isopentenyl diphosphate binding site. (2E)-geranyl diphosphate-binding residues include Lys182, Thr183, Gln220, and Lys237.

Belongs to the FPP/GGPP synthase family. It depends on Mg(2+) as a cofactor.

Its subcellular location is the cytoplasm. The enzyme catalyses isopentenyl diphosphate + (2E)-geranyl diphosphate = (2E,6E)-farnesyl diphosphate + diphosphate. The chain is Farnesyl diphosphate synthase (ispA) from Bacillus subtilis (strain 168).